A 106-amino-acid chain; its full sequence is 1-deoxy-D-xylulose 5-phosphate reductoisomerase (106 aa).

Residue Asp-3 coordinates Mn(2+). 8 residues coordinate 1-deoxy-D-xylulose 5-phosphate: Ser-4, Glu-5, Ser-29, His-52, Ser-65, Asn-70, Lys-71, and Glu-74. Mn(2+) is bound at residue Glu-5. Glu-74 contacts Mn(2+).

This sequence belongs to the DXR family. It depends on Mn(2+) as a cofactor. Requires Mg(2+) as cofactor.

Its subcellular location is the plastid. The protein localises to the chloroplast stroma. It catalyses the reaction 2-C-methyl-D-erythritol 4-phosphate + NADP(+) = 1-deoxy-D-xylulose 5-phosphate + NADPH + H(+). The protein operates within isoprenoid biosynthesis; isopentenyl diphosphate biosynthesis via DXP pathway; isopentenyl diphosphate from 1-deoxy-D-xylulose 5-phosphate: step 1/6. Its function is as follows. Enzyme of the plastid non-mevalonate pathway for isoprenoid biosynthesis that catalyzes the NADPH-dependent rearrangement and reduction of 1-deoxy-D-xylulose-5-phosphate (DXP) to 2-C-methyl-D-erythritol 4-phosphate (MEP). Required for chloroplast development. In Origanum vulgare (Wild marjoram), this protein is 1-deoxy-D-xylulose 5-phosphate reductoisomerase.